Here is a 314-residue protein sequence, read N- to C-terminus: uncharacterized protein (314 aa).

Residues 1–18 form the signal peptide; the sequence is MLIQILFLIILTLNCSYS. 4 N-linked (GlcNAc...) asparagine glycosylation sites follow: Asn68, Asn72, Asn106, and Asn256.

The protein resides in the secreted. This is an uncharacterized protein from Caenorhabditis elegans.